A 473-amino-acid polypeptide reads, in one-letter code: Glucose facilitated diffusion protein (473 aa).

Topologically, residues methionine 1–leucine 13 are cytoplasmic. A helical membrane pass occupies residues alanine 14 to isoleucine 34. The Periplasmic portion of the chain corresponds to glycine 35–methionine 59. The helical transmembrane segment at valine 60 to isoleucine 80 threads the bilayer. The Cytoplasmic portion of the chain corresponds to arginine 81–arginine 85. The helical transmembrane segment at glycine 86–glutamate 106 threads the bilayer. Topologically, residues lysine 107–glycine 112 are periplasmic. The chain crosses the membrane as a helical span at residues glycine 113–valine 133. The Cytoplasmic portion of the chain corresponds to serine 134 to glutamine 158. Residues methionine 159–glycine 179 form a helical membrane-spanning segment. The Periplasmic segment spans residues serine 180 to serine 187. The chain crosses the membrane as a helical span at residues glycine 188 to leucine 208. The Cytoplasmic portion of the chain corresponds to threonine 209–serine 257. The helical transmembrane segment at serine 258–phenylalanine 278 threads the bilayer. Residues glutamine 279–aspartate 303 lie on the Periplasmic side of the membrane. The chain crosses the membrane as a helical span at residues threonine 304 to serine 324. Residues arginine 325–leucine 335 are Cytoplasmic-facing. A helical transmembrane segment spans residues leucine 336–phenylalanine 356. Residues lysine 357–serine 366 lie on the Periplasmic side of the membrane. Residues valine 367–serine 387 traverse the membrane as a helical segment. Topologically, residues glutamate 388–glycine 396 are cytoplasmic. The chain crosses the membrane as a helical span at residues alanine 397–phenylalanine 417. Topologically, residues lysine 418–threonine 429 are periplasmic. A helical transmembrane segment spans residues phenylalanine 430–valine 450. Topologically, residues alanine 451–lysine 473 are cytoplasmic.

Belongs to the major facilitator superfamily. Sugar transporter (TC 2.A.1.1) family.

The protein localises to the cell inner membrane. Functionally, allows uptake of glucose by the cell; allows growth on glucose minimal medium by E.coli cells impaired in glucose transport. Also transports fructose, but has a strong preference for glucose. The sequence is that of Glucose facilitated diffusion protein from Zymomonas mobilis subsp. mobilis (strain ATCC 31821 / ZM4 / CP4).